Reading from the N-terminus, the 407-residue chain is Peptidase T (407 aa).

A Zn(2+)-binding site is contributed by His-82. The active site involves Asp-84. Zn(2+) is bound at residue Asp-143. The active-site Proton acceptor is Glu-177. Residues Glu-178, Asp-200, and His-382 each contribute to the Zn(2+) site.

This sequence belongs to the peptidase M20B family. Zn(2+) is required as a cofactor.

The protein localises to the cytoplasm. The enzyme catalyses Release of the N-terminal residue from a tripeptide.. Functionally, cleaves the N-terminal amino acid of tripeptides. This Streptococcus pyogenes serotype M2 (strain MGAS10270) protein is Peptidase T.